The following is a 122-amino-acid chain: Large ribosomal subunit protein uL14 (122 aa).

This sequence belongs to the universal ribosomal protein uL14 family. As to quaternary structure, part of the 50S ribosomal subunit. Forms a cluster with proteins L3 and L19. In the 70S ribosome, L14 and L19 interact and together make contacts with the 16S rRNA in bridges B5 and B8.

Its function is as follows. Binds to 23S rRNA. Forms part of two intersubunit bridges in the 70S ribosome. This Desulfosudis oleivorans (strain DSM 6200 / JCM 39069 / Hxd3) (Desulfococcus oleovorans) protein is Large ribosomal subunit protein uL14.